The following is a 402-amino-acid chain: Zinc finger CCCH domain-containing protein 35 (402 aa).

C3H1-type zinc fingers lie at residues 117-144 and 152-176; these read CYSG…HGVF and RYRT…HTPD. Disordered stretches follow at residues 180–211 and 232–258; these read VLPP…AESY and SSPT…DAAG. Residues 183–192 are compositionally biased toward polar residues; the sequence is PSQQQGSNSP. A compositionally biased stretch (low complexity) spans 232 to 241; the sequence is SSPTSTLVSP. The segment covering 242-253 has biased composition (pro residues); that stretch reads PRSPPSESPPLS.

This Oryza sativa subsp. japonica (Rice) protein is Zinc finger CCCH domain-containing protein 35.